The sequence spans 337 residues: Pyridoxal 5'-phosphate synthase subunit PdxS (337 aa).

Aspartate 65 provides a ligand contact to D-ribose 5-phosphate. Lysine 122 serves as the catalytic Schiff-base intermediate with D-ribose 5-phosphate. Residue glycine 194 coordinates D-ribose 5-phosphate. Lysine 206 is a binding site for D-glyceraldehyde 3-phosphate. D-ribose 5-phosphate-binding positions include glycine 255 and 276-277 (GS).

It belongs to the PdxS/SNZ family. In the presence of PdxT, forms a dodecamer of heterodimers.

It carries out the reaction aldehydo-D-ribose 5-phosphate + D-glyceraldehyde 3-phosphate + L-glutamine = pyridoxal 5'-phosphate + L-glutamate + phosphate + 3 H2O + H(+). Its pathway is cofactor biosynthesis; pyridoxal 5'-phosphate biosynthesis. In terms of biological role, catalyzes the formation of pyridoxal 5'-phosphate from ribose 5-phosphate (RBP), glyceraldehyde 3-phosphate (G3P) and ammonia. The ammonia is provided by the PdxT subunit. Can also use ribulose 5-phosphate and dihydroxyacetone phosphate as substrates, resulting from enzyme-catalyzed isomerization of RBP and G3P, respectively. The sequence is that of Pyridoxal 5'-phosphate synthase subunit PdxS from Pyrobaculum arsenaticum (strain DSM 13514 / JCM 11321 / PZ6).